The chain runs to 210 residues: Large ribosomal subunit protein mL57 (210 aa).

The N-terminal 59 residues, 1-59, are a transit peptide targeting the mitochondrion; sequence MLTRHCNRLGLQIENKFVFRSSSWNCVRRIGKIACNENKYRYEMTSTEEDIDSFFSRVF.

The protein belongs to the ribonuclease III family. Mitochondrion-specific ribosomal protein mL57 subfamily. Component of the mitochondrial large ribosomal subunit (mt-LSU). Mature yeast 74S mitochondrial ribosomes consist of a small (37S) and a large (54S) subunit. The 37S small subunit contains a 15S ribosomal RNA (15S mt-rRNA) and at least 32 different proteins. The 54S large subunit contains a 21S rRNA (21S mt-rRNA) and at least 45 different proteins. mL57 forms a heterodimer with mL44 and stabilizes rRNA expansion segments 1/2 at a membrane-facing protuberance close to the point of attachment of the ribosome to the translocon in the membrane.

The protein localises to the mitochondrion. Functionally, component of the mitochondrial ribosome (mitoribosome), a dedicated translation machinery responsible for the synthesis of mitochondrial genome-encoded proteins, including at least some of the essential transmembrane subunits of the mitochondrial respiratory chain. The mitoribosomes are attached to the mitochondrial inner membrane and translation products are cotranslationally integrated into the membrane. This Schizosaccharomyces pombe (strain 972 / ATCC 24843) (Fission yeast) protein is Large ribosomal subunit protein mL57 (mrp15).